Here is a 916-residue protein sequence, read N- to C-terminus: Isoleucine--tRNA ligase (916 aa).

Residues 57–67 (PYANGNLHMGH) carry the 'HIGH' region motif. L-isoleucyl-5'-AMP is bound at residue Glu-554. The 'KMSKS' region signature appears at 595-599 (KMSKS). Lys-598 contacts ATP. Zn(2+) is bound by residues Cys-885, Cys-888, Cys-905, and Cys-908.

This sequence belongs to the class-I aminoacyl-tRNA synthetase family. IleS type 1 subfamily. Monomer. Requires Zn(2+) as cofactor.

Its subcellular location is the cytoplasm. It carries out the reaction tRNA(Ile) + L-isoleucine + ATP = L-isoleucyl-tRNA(Ile) + AMP + diphosphate. Functionally, catalyzes the attachment of isoleucine to tRNA(Ile). As IleRS can inadvertently accommodate and process structurally similar amino acids such as valine, to avoid such errors it has two additional distinct tRNA(Ile)-dependent editing activities. One activity is designated as 'pretransfer' editing and involves the hydrolysis of activated Val-AMP. The other activity is designated 'posttransfer' editing and involves deacylation of mischarged Val-tRNA(Ile). The chain is Isoleucine--tRNA ligase from Staphylococcus haemolyticus (strain JCSC1435).